Reading from the N-terminus, the 284-residue chain is Elongation factor Ts (284 aa).

Positions 80 to 83 (TDFV) are involved in Mg(2+) ion dislocation from EF-Tu.

The protein belongs to the EF-Ts family.

Its subcellular location is the cytoplasm. In terms of biological role, associates with the EF-Tu.GDP complex and induces the exchange of GDP to GTP. It remains bound to the aminoacyl-tRNA.EF-Tu.GTP complex up to the GTP hydrolysis stage on the ribosome. The sequence is that of Elongation factor Ts from Neisseria meningitidis serogroup A / serotype 4A (strain DSM 15465 / Z2491).